The following is a 359-amino-acid chain: 3-dehydroquinate synthase (359 aa).

NAD(+)-binding positions include 71–76 (DGEAHK), 105–109 (GVIGD), 129–130 (TT), K142, K151, and 169–172 (TLHT). Zn(2+)-binding residues include E184, H247, and H264.

This sequence belongs to the sugar phosphate cyclases superfamily. Dehydroquinate synthase family. Requires NAD(+) as cofactor. The cofactor is Co(2+). Zn(2+) serves as cofactor.

It localises to the cytoplasm. It carries out the reaction 7-phospho-2-dehydro-3-deoxy-D-arabino-heptonate = 3-dehydroquinate + phosphate. It participates in metabolic intermediate biosynthesis; chorismate biosynthesis; chorismate from D-erythrose 4-phosphate and phosphoenolpyruvate: step 2/7. Its function is as follows. Catalyzes the conversion of 3-deoxy-D-arabino-heptulosonate 7-phosphate (DAHP) to dehydroquinate (DHQ). The chain is 3-dehydroquinate synthase from Neisseria meningitidis serogroup A / serotype 4A (strain DSM 15465 / Z2491).